Here is a 367-residue protein sequence, read N- to C-terminus: NADH-quinone oxidoreductase subunit D (367 aa).

This sequence belongs to the complex I 49 kDa subunit family. In terms of assembly, NDH-1 is composed of 14 different subunits. Subunits NuoB, C, D, E, F, and G constitute the peripheral sector of the complex.

It localises to the cell membrane. It carries out the reaction a quinone + NADH + 5 H(+)(in) = a quinol + NAD(+) + 4 H(+)(out). Its function is as follows. NDH-1 shuttles electrons from NADH, via FMN and iron-sulfur (Fe-S) centers, to quinones in the respiratory chain. The immediate electron acceptor for the enzyme in this species is believed to be ubiquinone. Couples the redox reaction to proton translocation (for every two electrons transferred, four hydrogen ions are translocated across the cytoplasmic membrane), and thus conserves the redox energy in a proton gradient. The chain is NADH-quinone oxidoreductase subunit D from Dehalococcoides mccartyi (strain ATCC BAA-2100 / JCM 16839 / KCTC 5957 / BAV1).